Reading from the N-terminus, the 528-residue chain is Proteinaceous RNase P 2 (528 aa).

Residues 1-16 (MAASDQHRSRRHDESS) are compositionally biased toward basic and acidic residues. Positions 1-28 (MAASDQHRSRRHDESSSRPNKKKKVSRN) are disordered. PPR repeat units lie at residues 29-64 (PETN…EVRL), 72-107 (LLYL…GISP), 108-142 (NEAS…GGVS), and 145-179 (RLRT…GIAL). Residues 275 to 511 (VSSTGRCLSC…NEESSRTWMC (237 aa)) form the PRORP domain. Residues Cys-281 and Cys-284 each contribute to the Zn(2+) site. The Mg(2+) site is built by Asp-343, Asp-421, Asp-422, and Asp-440. Residues His-494 and Cys-511 each contribute to the Zn(2+) site.

This sequence belongs to the PPR family. P subfamily. In terms of assembly, monomer; forms dimers in crystallo but monomers in solution. Mg(2+) is required as a cofactor.

It localises to the nucleus. It catalyses the reaction Endonucleolytic cleavage of RNA, removing 5'-extranucleotides from tRNA precursor.. Functionally, endonuclease RNase P responsible for the 5' maturation of tRNA precursors. Preferentially binds precursor tRNAs containing short 5' leaders and 3' trailers. Also involved in the maturation of mRNA and small nucleolar RNA (snoRNA). The polypeptide is Proteinaceous RNase P 2 (PRORP2) (Arabidopsis thaliana (Mouse-ear cress)).